The sequence spans 115 residues: NADH-ubiquinone oxidoreductase chain 3 (115 aa).

3 helical membrane passes run 4 to 24 (LTALLVNITLSMLLIIIAFWL), 55 to 75 (FFLVAITFLLFDLEIALLLPL), and 83 to 103 (YINIMMSTAFILVSVLALGLA).

The protein belongs to the complex I subunit 3 family. Core subunit of respiratory chain NADH dehydrogenase (Complex I) which is composed of 45 different subunits. Interacts with TMEM186. Interacts with TMEM242.

The protein localises to the mitochondrion inner membrane. It catalyses the reaction a ubiquinone + NADH + 5 H(+)(in) = a ubiquinol + NAD(+) + 4 H(+)(out). Its function is as follows. Core subunit of the mitochondrial membrane respiratory chain NADH dehydrogenase (Complex I) which catalyzes electron transfer from NADH through the respiratory chain, using ubiquinone as an electron acceptor. Essential for the catalytic activity of complex I. The protein is NADH-ubiquinone oxidoreductase chain 3 of Peromyscus polionotus (Oldfield mouse).